The sequence spans 657 residues: Threonine--tRNA ligase (657 aa).

One can recognise a TGS domain in the interval 7–70; it reads DRQQVIITLP…TENARVSIIT (64 aa). The segment at 253–555 is catalytic; sequence DHRKLGAELG…LIEHTAGNFP (303 aa). 3 residues coordinate Zn(2+): Cys351, His402, and His532.

It belongs to the class-II aminoacyl-tRNA synthetase family. Homodimer. The cofactor is Zn(2+).

The protein localises to the cytoplasm. The enzyme catalyses tRNA(Thr) + L-threonine + ATP = L-threonyl-tRNA(Thr) + AMP + diphosphate + H(+). Catalyzes the attachment of threonine to tRNA(Thr) in a two-step reaction: L-threonine is first activated by ATP to form Thr-AMP and then transferred to the acceptor end of tRNA(Thr). Also edits incorrectly charged L-seryl-tRNA(Thr). In Chlorobaculum tepidum (strain ATCC 49652 / DSM 12025 / NBRC 103806 / TLS) (Chlorobium tepidum), this protein is Threonine--tRNA ligase.